The sequence spans 462 residues: Glycine--tRNA ligase (462 aa).

Residues R100 and E175 each coordinate substrate. ATP contacts are provided by residues 207-209, 217-222, 291-292, and 335-338; these read RNE, FRTREF, EL, and GADR. 222–226 is a binding site for substrate; sequence FEQME. Substrate is bound at residue 331 to 335; it reads EPSLG.

It belongs to the class-II aminoacyl-tRNA synthetase family. In terms of assembly, homodimer.

The protein localises to the cytoplasm. The enzyme catalyses tRNA(Gly) + glycine + ATP = glycyl-tRNA(Gly) + AMP + diphosphate. Functionally, catalyzes the attachment of glycine to tRNA(Gly). In Clostridium acetobutylicum (strain ATCC 824 / DSM 792 / JCM 1419 / IAM 19013 / LMG 5710 / NBRC 13948 / NRRL B-527 / VKM B-1787 / 2291 / W), this protein is Glycine--tRNA ligase.